The sequence spans 72 residues: Defensin 3 (72 aa).

Positions 1 to 25 (MEKKMAGFCIFFLVLFLAQEYGVEG) are cleaved as a signal peptide. Intrachain disulfides connect Cys-28-Cys-72, Cys-39-Cys-60, and Cys-45-Cys-66.

It belongs to the DEFL family. As to quaternary structure, may form dimers. In terms of processing, not glycosylated. Has 4 disulfide bonds.

Its function is as follows. Probably has antifungal activity. The sequence is that of Defensin 3 from Arachis hypogaea (Peanut).